The primary structure comprises 347 residues: GMP reductase (347 aa).

Residue 108–131 coordinates NADP(+); that stretch reads ADFEKTVQILALDPALNFVCIDVA. K(+)-binding residues include Gly-181 and Gly-183. Cys-186 acts as the Thioimidate intermediate in catalysis. 216–239 contributes to the NADP(+) binding site; that stretch reads IVSDGGCTMPGDVAKAFGGGADFV.

The protein belongs to the IMPDH/GMPR family. GuaC type 1 subfamily. As to quaternary structure, homotetramer.

It carries out the reaction IMP + NH4(+) + NADP(+) = GMP + NADPH + 2 H(+). Catalyzes the irreversible NADPH-dependent deamination of GMP to IMP. It functions in the conversion of nucleobase, nucleoside and nucleotide derivatives of G to A nucleotides, and in maintaining the intracellular balance of A and G nucleotides. This chain is GMP reductase, found in Salmonella paratyphi B (strain ATCC BAA-1250 / SPB7).